The sequence spans 152 residues: Large ribosomal subunit protein uL22 (152 aa).

The segment covering 124–145 (APKKAAAKKAAPAKETTPAATE) has biased composition (low complexity). Residues 124–152 (APKKAAAKKAAPAKETTPAATESKTEGAE) are disordered.

It belongs to the universal ribosomal protein uL22 family. In terms of assembly, part of the 50S ribosomal subunit.

This protein binds specifically to 23S rRNA; its binding is stimulated by other ribosomal proteins, e.g. L4, L17, and L20. It is important during the early stages of 50S assembly. It makes multiple contacts with different domains of the 23S rRNA in the assembled 50S subunit and ribosome. Its function is as follows. The globular domain of the protein is located near the polypeptide exit tunnel on the outside of the subunit, while an extended beta-hairpin is found that lines the wall of the exit tunnel in the center of the 70S ribosome. The chain is Large ribosomal subunit protein uL22 from Salinispora tropica (strain ATCC BAA-916 / DSM 44818 / JCM 13857 / NBRC 105044 / CNB-440).